The following is a 236-amino-acid chain: Uridylate kinase (236 aa).

Residue 12–15 (KISG) coordinates ATP. The segment at 20-25 (GTNGYG) is involved in allosteric activation by GTP. G54 serves as a coordination point for UMP. ATP contacts are provided by G55 and R59. UMP is bound by residues D72 and 133–140 (TGNPYFST). The ATP site is built by Y166 and D169.

The protein belongs to the UMP kinase family. As to quaternary structure, homohexamer.

It localises to the cytoplasm. The enzyme catalyses UMP + ATP = UDP + ADP. It functions in the pathway pyrimidine metabolism; CTP biosynthesis via de novo pathway; UDP from UMP (UMPK route): step 1/1. With respect to regulation, allosterically activated by GTP. Inhibited by UTP. Catalyzes the reversible phosphorylation of UMP to UDP. The sequence is that of Uridylate kinase from Clostridium acetobutylicum (strain ATCC 824 / DSM 792 / JCM 1419 / IAM 19013 / LMG 5710 / NBRC 13948 / NRRL B-527 / VKM B-1787 / 2291 / W).